We begin with the raw amino-acid sequence, 147 residues long: Hemoglobin subunit beta-2 (147 aa).

The 145-residue stretch at 3-147 (HWTAEEKAAI…LVDGLSQGYN (145 aa)) folds into the Globin domain. The heme b site is built by His64 and His93.

It belongs to the globin family. Heterotetramer of two alpha chains and two beta chains. Red blood cells.

Its function is as follows. Involved in oxygen transport from the lung to the various peripheral tissues. In Xenopus laevis (African clawed frog), this protein is Hemoglobin subunit beta-2 (hbb2).